The chain runs to 527 residues: Glucose-6-phosphate isomerase (527 aa).

The active-site Proton donor is the glutamate 347. Catalysis depends on residues histidine 378 and lysine 493.

This sequence belongs to the GPI family.

It is found in the cytoplasm. The catalysed reaction is alpha-D-glucose 6-phosphate = beta-D-fructose 6-phosphate. The protein operates within carbohydrate biosynthesis; gluconeogenesis. It functions in the pathway carbohydrate degradation; glycolysis; D-glyceraldehyde 3-phosphate and glycerone phosphate from D-glucose: step 2/4. In terms of biological role, catalyzes the reversible isomerization of glucose-6-phosphate to fructose-6-phosphate. The polypeptide is Glucose-6-phosphate isomerase (Chlamydia caviae (strain ATCC VR-813 / DSM 19441 / 03DC25 / GPIC) (Chlamydophila caviae)).